The following is a 307-amino-acid chain: Probable 2-methylisocitrate lyase 2 (307 aa).

Residue 53 to 55 participates in substrate binding; that stretch reads SGA. The Mg(2+) site is built by D92 and D94. Substrate-binding positions include 129-130, R164, E194, 216-218, R247, and R276; these read CG and NMT.

It belongs to the isocitrate lyase/PEP mutase superfamily. Methylisocitrate lyase family. In terms of assembly, homotetramer; dimer of dimers. The cofactor is Mg(2+).

The enzyme catalyses (2S,3R)-3-hydroxybutane-1,2,3-tricarboxylate = pyruvate + succinate. Its pathway is organic acid metabolism; propanoate degradation. Its function is as follows. Involved in the catabolism of short chain fatty acids (SCFA) via the 2-methylcitrate cycle I (propionate degradation route). Catalyzes the thermodynamically favored C-C bond cleavage of (2R,3S)-2-methylisocitrate to yield pyruvate and succinate via an alpha-carboxy-carbanion intermediate. In Corynebacterium glutamicum (strain ATCC 13032 / DSM 20300 / JCM 1318 / BCRC 11384 / CCUG 27702 / LMG 3730 / NBRC 12168 / NCIMB 10025 / NRRL B-2784 / 534), this protein is Probable 2-methylisocitrate lyase 2.